Reading from the N-terminus, the 434-residue chain is Glutamate-1-semialdehyde 2,1-aminomutase (434 aa).

N6-(pyridoxal phosphate)lysine is present on lysine 273.

Belongs to the class-III pyridoxal-phosphate-dependent aminotransferase family. HemL subfamily. Homodimer. Requires pyridoxal 5'-phosphate as cofactor.

It is found in the cytoplasm. It catalyses the reaction (S)-4-amino-5-oxopentanoate = 5-aminolevulinate. It participates in porphyrin-containing compound metabolism; protoporphyrin-IX biosynthesis; 5-aminolevulinate from L-glutamyl-tRNA(Glu): step 2/2. The sequence is that of Glutamate-1-semialdehyde 2,1-aminomutase from Polynucleobacter asymbioticus (strain DSM 18221 / CIP 109841 / QLW-P1DMWA-1) (Polynucleobacter necessarius subsp. asymbioticus).